The sequence spans 34 residues: Potassium channel toxin alpha-KTx 18.2 (34 aa).

3 disulfides stabilise this stretch: C7–C26, C12–C31, and C16–C33.

As to expression, expressed by the venom gland.

The protein resides in the secreted. Reversibly blocks Shaker B potassium channels. The protein is Potassium channel toxin alpha-KTx 18.2 of Tityus discrepans (Venezuelan scorpion).